Consider the following 67-residue polypeptide: Large ribosomal subunit protein uL29 (67 aa).

The protein belongs to the universal ribosomal protein uL29 family.

This is Large ribosomal subunit protein uL29 from Ehrlichia ruminantium (strain Gardel).